The following is a 298-amino-acid chain: Probable GTP 3',8-cyclase (298 aa).

The 218-residue stretch at 4 to 221 (RYGREIRSFR…VFTRKFMQNR (218 aa)) folds into the Radical SAM core domain. Arg13 provides a ligand contact to GTP. [4Fe-4S] cluster-binding residues include Cys20 and Cys24. Residue Tyr26 participates in S-adenosyl-L-methionine binding. Cys27 provides a ligand contact to [4Fe-4S] cluster. Position 61 (Lys61) interacts with GTP. Gly65 contributes to the S-adenosyl-L-methionine binding site. Thr91 provides a ligand contact to GTP. Ser115 contributes to the S-adenosyl-L-methionine binding site. Lys152 provides a ligand contact to GTP. [4Fe-4S] cluster-binding residues include Cys243 and Cys246. 248–250 (RIR) contributes to the GTP binding site. Cys260 contacts [4Fe-4S] cluster.

The protein belongs to the radical SAM superfamily. MoaA family. The cofactor is [4Fe-4S] cluster.

The enzyme catalyses GTP + AH2 + S-adenosyl-L-methionine = (8S)-3',8-cyclo-7,8-dihydroguanosine 5'-triphosphate + 5'-deoxyadenosine + L-methionine + A + H(+). It participates in cofactor biosynthesis; molybdopterin biosynthesis. Its function is as follows. Catalyzes the cyclization of GTP to (8S)-3',8-cyclo-7,8-dihydroguanosine 5'-triphosphate. The polypeptide is Probable GTP 3',8-cyclase (Methanococcus maripaludis (strain C7 / ATCC BAA-1331)).